Reading from the N-terminus, the 331-residue chain is ESX-3 secretion system protein EccE3 (331 aa).

2 helical membrane-spanning segments follow: residues 11 to 31 (GRVT…PWQS) and 37 to 57 (LLGV…GLYF).

The protein belongs to the EccE family. Part of the ESX-3 / type VII secretion system (T7SS), which is composed of cytosolic and membrane components. The ESX-3 membrane complex is composed of EccB3, EccC3, EccD3 and EccE3.

It localises to the cell inner membrane. In terms of biological role, part of the ESX-3 specialized secretion system, which is important for iron and zinc uptake or homeostasis. The chain is ESX-3 secretion system protein EccE3 from Mycobacterium tuberculosis (strain ATCC 25618 / H37Rv).